Consider the following 561-residue polypeptide: uncharacterized protein (561 aa).

2 disordered regions span residues 20 to 42 (IQEQATSDTKPESSPDINLGCSP) and 82 to 283 (QIGS…STPF). Positions 103–131 (DKISEDTDQERVVVCESLENKSSSKDKSP) are enriched in basic and acidic residues. Basic residues-rich tracts occupy residues 135 to 156 (RSPKRHKSSKKHKSSKKHKSSK) and 165 to 185 (KSSKRHKSHKKKDKSHKKRYR). 3 stretches are compositionally biased toward basic and acidic residues: residues 192-203 (SLSRDRSSSRDR), 211-247 (YSRDRSLSRDRSLSRDRSLSRDRSPPRDRSLSRDRSP), and 259-272 (PLRDRSPTRDRSVS).

The protein belongs to the mimivirus L41 family.

This is an uncharacterized protein from Acanthamoeba polyphaga (Amoeba).